The primary structure comprises 218 residues: Probable WRKY transcription factor 12 (218 aa).

Positions 49-63 (SSLSSPSFPIHNSSS) are enriched in low complexity. 2 disordered regions span residues 49–120 (SSLS…DMKN) and 199–218 (HNHI…LSSF). The segment covering 64 to 77 (TTTTHAPLGFSNNL) has biased composition (polar residues). Positions 105–116 (SNSWWRSNSGSG) are enriched in low complexity. Positions 139-204 (SDVDVLDDGY…YEGRHNHIPS (66 aa)) form a DNA-binding region, WRKY.

It belongs to the WRKY group II-c family.

It localises to the nucleus. Transcription factor. Interacts specifically with the W box (5'-(T)TGAC[CT]-3'), a frequently occurring elicitor-responsive cis-acting element. The chain is Probable WRKY transcription factor 12 (WRKY12) from Arabidopsis thaliana (Mouse-ear cress).